The following is a 477-amino-acid chain: MKITLPPFDQARVLVAGDLMLDRYWHGGTDRISPEAPVPVVHVRDIEQRPGGAGNVALNVAALGGQPELVGITGQDEAANELASLLENAGVACHFRRQPGAATITKLRVISRHQQLIRLDFEDGFPGAHARDLLPQYRPLLAGCGAVVLSDYAKGALRDPRPLIEAAREAGVPVLADPKGRDFSIYRGATLITPNLAEFEAVVGRCADEDTLVRRGEALARECGIEALLVTRGEDGMSLVRPGEAPVHLAARAREVFDVTGAGDTVIATLATGLATGLALPQAMALANLAAGIVVGKLGTATVSVAELRRALQEQEQSGRGVLTEPELLHAVADARAHGERIVMTNGCFDLLHAGHVAYLEQARSRGDRLIVAVNDDASVRRLKGEGRPINPVQQRMAVLAGLASVDWVVPFSEDTPARVIGAVLPDVLVKGGDYQPEAIAGHDAVVAHGGRVEILDFLDGCSTSAMIERMQSAPDT.

Residues 1-319 form a ribokinase region; the sequence is MKITLPPFDQ…RALQEQEQSG (319 aa). 195 to 198 is an ATP binding site; the sequence is NLAE. Asp264 is a catalytic residue. The cytidylyltransferase stretch occupies residues 344-477; it reads MTNGCFDLLH…IERMQSAPDT (134 aa).

This sequence in the N-terminal section; belongs to the carbohydrate kinase PfkB family. The protein in the C-terminal section; belongs to the cytidylyltransferase family. In terms of assembly, homodimer.

The enzyme catalyses D-glycero-beta-D-manno-heptose 7-phosphate + ATP = D-glycero-beta-D-manno-heptose 1,7-bisphosphate + ADP + H(+). The catalysed reaction is D-glycero-beta-D-manno-heptose 1-phosphate + ATP + H(+) = ADP-D-glycero-beta-D-manno-heptose + diphosphate. The protein operates within nucleotide-sugar biosynthesis; ADP-L-glycero-beta-D-manno-heptose biosynthesis; ADP-L-glycero-beta-D-manno-heptose from D-glycero-beta-D-manno-heptose 7-phosphate: step 1/4. It participates in nucleotide-sugar biosynthesis; ADP-L-glycero-beta-D-manno-heptose biosynthesis; ADP-L-glycero-beta-D-manno-heptose from D-glycero-beta-D-manno-heptose 7-phosphate: step 3/4. Its function is as follows. Catalyzes the phosphorylation of D-glycero-D-manno-heptose 7-phosphate at the C-1 position to selectively form D-glycero-beta-D-manno-heptose-1,7-bisphosphate. In terms of biological role, catalyzes the ADP transfer from ATP to D-glycero-beta-D-manno-heptose 1-phosphate, yielding ADP-D-glycero-beta-D-manno-heptose. The chain is Bifunctional protein HldE from Alkalilimnicola ehrlichii (strain ATCC BAA-1101 / DSM 17681 / MLHE-1).